A 145-amino-acid chain; its full sequence is uncharacterized protein (145 aa).

A helical transmembrane segment spans residues 16–36; it reads VLAYLLQLSASLVLPVAIWLI.

Its subcellular location is the mitochondrion membrane. This is an uncharacterized protein from Arabidopsis thaliana (Mouse-ear cress).